Consider the following 207-residue polypeptide: Large ribosomal subunit protein uL3 (207 aa).

The disordered stretch occupies residues 126 to 149; sequence GPASHGSKKWHRRPGSIGQRKTPG.

The protein belongs to the universal ribosomal protein uL3 family. Part of the 50S ribosomal subunit. Forms a cluster with proteins L14 and L19.

In terms of biological role, one of the primary rRNA binding proteins, it binds directly near the 3'-end of the 23S rRNA, where it nucleates assembly of the 50S subunit. The protein is Large ribosomal subunit protein uL3 of Deinococcus geothermalis (strain DSM 11300 / CIP 105573 / AG-3a).